The primary structure comprises 376 residues: MINLIEIRRQLHQIPEIGLEEHKTQKYLLTIIHQIIQNKSFIQVETWQTGILVYLKGSQGQKTIGWRTDIDGLPVEELTNLPFASKNGRMHACGHDIHMTVALGLLEKLSESQPKNNLLFLFQPAEENEAGGKLMYDGGAFKNWLPDEFYGLHVRPDLKVGDIATNEQTLFAGTCEVELTFVGTGGHAAFPHTANDALVAAAYFVTQVQTIVSRNVDPLDSAVVTFGKMEAGTTNNIIAERAFLHGTIRSLTQEVNELTQKRLTELAKGVAQSFDMTIDLKLKQGGYLPVENNPKLAKELMDFFRNETKANLIDIAPAMTGEDFGYLLSKIPGVMFWLGINSEAPLHSQKMQADEEVLDFAVEAIGQFLDFKANRN.

Residue D69 is part of the active site. E127 functions as the Proton acceptor in the catalytic mechanism.

Belongs to the peptidase M20A family. N-acetyldiaminopimelate deacetylase subfamily.

It carries out the reaction N-acetyl-(2S,6S)-2,6-diaminopimelate + H2O = (2S,6S)-2,6-diaminopimelate + acetate. Its pathway is amino-acid biosynthesis; L-lysine biosynthesis via DAP pathway; LL-2,6-diaminopimelate from (S)-tetrahydrodipicolinate (acetylase route): step 3/3. Functionally, catalyzes the conversion of N-acetyl-diaminopimelate to diaminopimelate and acetate. The chain is N-acetyldiaminopimelate deacetylase from Lactococcus lactis subsp. cremoris (strain SK11).